A 529-amino-acid chain; its full sequence is MQQRRPIRRALLSVSDKAGIIEFAQALSQRGIELLSTGGTARLLADAGLPVTEVSDYTGFPEMMDGRVKTLHPKVHGGILGRRGQDDGIMAQHGIQPIDIVVVNLYPFAQTVARPDCSLEDAVENIDIGGPTMVRSAAKNHKDVAIVVKSSDYPAIITELDNNDGSLTYPTRFNLAIKAFEHTAAYDSMIANYFGTLVPPYHGDTEQPSGHFPRTLNLNYIKKQDMRYGENSHQQAAFYIEEDVKEASVATAQQLQGKALSYNNIADTDAALECVKEFSEPACVIVKHANPCGVAIGDSILAAYERAYQTDPTSAFGGIIAFNRELDAATANAIISRQFVEVIIAPTVSSDALALLAAKQNVRVLTCGQWQARSAGLDFKRVNGGLLVQERDLGMVTAADLRVVSKRQPTEQELRDALFCWKVAKFVKSNAIVYARDNMTIGIGAGQMSRVYSAKIAGIKAADEGLEVAGSAMASDAFFPFRDGIDAAAAVGITCVIQPGGSIRDDEVIAAADEHGIAMIFTDMRHFRH.

The MGS-like domain maps to 1-148; it reads MQQRRPIRRA…KNHKDVAIVV (148 aa).

Belongs to the PurH family.

It catalyses the reaction (6R)-10-formyltetrahydrofolate + 5-amino-1-(5-phospho-beta-D-ribosyl)imidazole-4-carboxamide = 5-formamido-1-(5-phospho-D-ribosyl)imidazole-4-carboxamide + (6S)-5,6,7,8-tetrahydrofolate. It carries out the reaction IMP + H2O = 5-formamido-1-(5-phospho-D-ribosyl)imidazole-4-carboxamide. It functions in the pathway purine metabolism; IMP biosynthesis via de novo pathway; 5-formamido-1-(5-phospho-D-ribosyl)imidazole-4-carboxamide from 5-amino-1-(5-phospho-D-ribosyl)imidazole-4-carboxamide (10-formyl THF route): step 1/1. The protein operates within purine metabolism; IMP biosynthesis via de novo pathway; IMP from 5-formamido-1-(5-phospho-D-ribosyl)imidazole-4-carboxamide: step 1/1. The sequence is that of Bifunctional purine biosynthesis protein PurH from Yersinia pseudotuberculosis serotype IB (strain PB1/+).